Consider the following 311-residue polypeptide: Ribonuclease HIII (311 aa).

One can recognise an RNase H type-2 domain in the interval 95 to 311 (MSIVGSDEVG…NTEKAFRLLK (217 aa)). A divalent metal cation is bound by residues Asp101, Glu102, and Asp206.

This sequence belongs to the RNase HII family. RnhC subfamily. The cofactor is Mn(2+). Mg(2+) serves as cofactor.

The protein resides in the cytoplasm. The catalysed reaction is Endonucleolytic cleavage to 5'-phosphomonoester.. Endonuclease that specifically degrades the RNA of RNA-DNA hybrids. This is Ribonuclease HIII from Bacillus cereus (strain ATCC 10987 / NRS 248).